Here is a 108-residue protein sequence, read N- to C-terminus: MIRRPPAVVCYICGREYGTKSISIHEPQCLKKWHNENNLLPKELRRPVPKKPEVRTITAKGFYDLDALNEAAWTSAHSQLVPCNVCGRTFLPDRLIVHQRSCKPKAAK.

2 consecutive C2HC/C3H-type zinc fingers follow at residues 6-35 and 79-108; these read PAVV…KWHN and QLVP…KAAK. Zn(2+) contacts are provided by C10, C13, H25, C29, C83, C86, H98, and C102.

Zn(2+) is required as a cofactor.

This chain is Zinc finger protein 475, found in Homo sapiens (Human).